The sequence spans 450 residues: Keratin, type I cytoskeletal 25 (450 aa).

A disordered region spans residues 1-24 (MSLRLPSGSRRASPRPTTGSLRLS). A head region spans residues 1-78 (MSLRLPSGSR…MNEGGLLSGN (78 aa)). The coil 1A stretch occupies residues 79–114 (EKVTMQNLNDRLASYLENVRALEEANADLEQKIKGW). The 316-residue stretch at 79–394 (EKVTMQNLND…LLIGGDDGAC (316 aa)) folds into the IF rod domain. The interval 115–136 (YEKFGPGSCRGLDHDYSRYFPI) is linker 1. Residues 137–228 (IEDLKNQIIA…KNHKEEMQVL (92 aa)) are coil 1B. The tract at residues 229–251 (QCAAGGNVNVEMNAAPGVDLTVL) is linker 12. A coil 2 region spans residues 252–390 (LNNMRAEYEA…ETYCLLIGGD (139 aa)). A tail region spans residues 391 to 450 (DGACKSGGYKSKDYAAGNMGNQMKDPIKAIVVKKVLEEVDQRSKILTTRLHSLEEKSQSN). S442 is modified (phosphoserine).

Belongs to the intermediate filament family. Heterodimer of a type I and a type II keratin. Heterodimer with type II keratin KRT5 leading to the formation of keratin intermediate filament (KIF) network. Interacts with KRT6A to form filaments.

It localises to the cytoplasm. In terms of biological role, essential for the proper assembly of type I and type II keratin protein complexes and formation of keratin intermediate filaments in the inner root sheath (irs). Plays a role in the cytoskeleton organization. This is Keratin, type I cytoskeletal 25 from Capra hircus (Goat).